The primary structure comprises 252 residues: Type III pantothenate kinase (252 aa).

6-13 contributes to the ATP binding site; the sequence is DIGNTSTA. Residue 104 to 107 participates in substrate binding; that stretch reads GADR. The Proton acceptor role is filled by Asp106. A K(+)-binding site is contributed by Asp128. Thr131 contacts ATP. Thr183 is a binding site for substrate.

It belongs to the type III pantothenate kinase family. As to quaternary structure, homodimer. NH4(+) is required as a cofactor. It depends on K(+) as a cofactor.

It localises to the cytoplasm. It carries out the reaction (R)-pantothenate + ATP = (R)-4'-phosphopantothenate + ADP + H(+). It participates in cofactor biosynthesis; coenzyme A biosynthesis; CoA from (R)-pantothenate: step 1/5. Its function is as follows. Catalyzes the phosphorylation of pantothenate (Pan), the first step in CoA biosynthesis. In Thermus thermophilus (strain ATCC 27634 / DSM 579 / HB8), this protein is Type III pantothenate kinase.